We begin with the raw amino-acid sequence, 72 residues long: Translation initiation factor IF-1 (72 aa).

In terms of domain architecture, S1-like spans 1–72 (MIKEDNIEMH…SKGRIIFRSR (72 aa)).

Belongs to the IF-1 family. Component of the 30S ribosomal translation pre-initiation complex which assembles on the 30S ribosome in the order IF-2 and IF-3, IF-1 and N-formylmethionyl-tRNA(fMet); mRNA recruitment can occur at any time during PIC assembly.

The protein resides in the cytoplasm. Its function is as follows. One of the essential components for the initiation of protein synthesis. Stabilizes the binding of IF-2 and IF-3 on the 30S subunit to which N-formylmethionyl-tRNA(fMet) subsequently binds. Helps modulate mRNA selection, yielding the 30S pre-initiation complex (PIC). Upon addition of the 50S ribosomal subunit IF-1, IF-2 and IF-3 are released leaving the mature 70S translation initiation complex. This is Translation initiation factor IF-1 from Blochmanniella floridana.